A 159-amino-acid polypeptide reads, in one-letter code: 2-C-methyl-D-erythritol 2,4-cyclodiphosphate synthase (159 aa).

A divalent metal cation contacts are provided by Asp-10 and His-12. 4-CDP-2-C-methyl-D-erythritol 2-phosphate-binding positions include 10–12 (DVH) and 36–37 (HS). An a divalent metal cation-binding site is contributed by His-44. 4-CDP-2-C-methyl-D-erythritol 2-phosphate-binding positions include 58 to 60 (DIG), 134 to 137 (TTSE), Phe-141, and Arg-144.

The protein belongs to the IspF family. In terms of assembly, homotrimer. It depends on a divalent metal cation as a cofactor.

The catalysed reaction is 4-CDP-2-C-methyl-D-erythritol 2-phosphate = 2-C-methyl-D-erythritol 2,4-cyclic diphosphate + CMP. The protein operates within isoprenoid biosynthesis; isopentenyl diphosphate biosynthesis via DXP pathway; isopentenyl diphosphate from 1-deoxy-D-xylulose 5-phosphate: step 4/6. In terms of biological role, involved in the biosynthesis of isopentenyl diphosphate (IPP) and dimethylallyl diphosphate (DMAPP), two major building blocks of isoprenoid compounds. Catalyzes the conversion of 4-diphosphocytidyl-2-C-methyl-D-erythritol 2-phosphate (CDP-ME2P) to 2-C-methyl-D-erythritol 2,4-cyclodiphosphate (ME-CPP) with a corresponding release of cytidine 5-monophosphate (CMP). This chain is 2-C-methyl-D-erythritol 2,4-cyclodiphosphate synthase, found in Cereibacter sphaeroides (strain ATCC 17025 / ATH 2.4.3) (Rhodobacter sphaeroides).